A 523-amino-acid chain; its full sequence is Putative L-type lectin-domain containing receptor kinase V.6 (523 aa).

The N-terminal stretch at 1–27 (MFSEVKVLQIVLVQWLTLFSFTYNSHG) is a signal peptide. Positions 28–242 (TYILDGSAVF…TGSIRALHYM (215 aa)) are legume-lectin like. The Extracellular segment spans residues 28–279 (TYILDGSAVF…KPSDRLRTVL (252 aa)). 4 N-linked (GlcNAc...) asparagine glycosylation sites follow: asparagine 47, asparagine 59, asparagine 112, and asparagine 171. Residues 280–300 (AVCLTLALFAVFLASGIGFVF) traverse the membrane as a helical segment. Residues 301 to 523 (YLRHKKVKEV…TGRAVRVKFF (223 aa)) lie on the Cytoplasmic side of the membrane. The Protein kinase domain maps to 335–523 (FKEKQLLGKG…TGRAVRVKFF (189 aa)). ATP-binding positions include 341–349 (LGKGGFGQV) and lysine 364. Aspartate 464 acts as the Proton acceptor in catalysis.

It in the C-terminal section; belongs to the protein kinase superfamily. Ser/Thr protein kinase family. In the N-terminal section; belongs to the leguminous lectin family.

It is found in the cell membrane. The enzyme catalyses L-seryl-[protein] + ATP = O-phospho-L-seryl-[protein] + ADP + H(+). The catalysed reaction is L-threonyl-[protein] + ATP = O-phospho-L-threonyl-[protein] + ADP + H(+). This chain is Putative L-type lectin-domain containing receptor kinase V.6 (LECRK56), found in Arabidopsis thaliana (Mouse-ear cress).